A 505-amino-acid chain; its full sequence is Cytochrome P450 76A2 (505 aa).

Cys448 provides a ligand contact to heme.

The protein belongs to the cytochrome P450 family. Heme serves as cofactor.

This Solanum melongena (Eggplant) protein is Cytochrome P450 76A2 (CYP76A2).